A 136-amino-acid polypeptide reads, in one-letter code: Cytokine-like protein 1 (136 aa).

Positions 1-22 (MRTPGPLPVLLLLLAGAPAARP) are cleaved as a signal peptide.

Specifically expressed in CD34+ hematopoietic cells.

It is found in the secreted. The sequence is that of Cytokine-like protein 1 (CYTL1) from Homo sapiens (Human).